A 773-amino-acid chain; its full sequence is Linolenate 9R-lipoxygenase (773 aa).

Residues Tyr-176–Ile-773 enclose the Lipoxygenase domain. Positions 515, 520, and 773 each coordinate Fe cation.

The protein belongs to the lipoxygenase family.

The catalysed reaction is (9Z,12Z,15Z)-octadecatrienoate + O2 = (9R,10E,12Z,15Z)-9-hydroperoxyoctadeca-10,12,15-trienoate. It participates in lipid metabolism; oxylipin biosynthesis. Functionally, catalyzes the conversion of alpha-linoleate to (9R,10E,12Z,15Z)-9-hydroperoxyoctadeca-10,12,15-trienoate in oxylipin biosynthesis. Also converts alpha-linoleate to (9R,10E,12Z)-9-hydroperoxyoctadeca-10,12-dienoate. This is Linolenate 9R-lipoxygenase from Nostoc sp. (strain PCC 7120 / SAG 25.82 / UTEX 2576).